Reading from the N-terminus, the 154-residue chain is Protein X (154 aa).

Positions 68–117 (PCALRFTSARRMETTVNAHQILPKVLHKRTLGLPAMSTTDLEAYFKDCVF) are mitochondrial targeting sequence.

This sequence belongs to the orthohepadnavirus protein X family. May form homodimer. May interact with host CEBPA, CFLAR, CREB1, DDB1, E4F1, HBXIP, HSPD1/HSP60, NFKBIA, POLR2E and SMAD4. Interacts with host SMC5-SMC6 complex and induces its degradation. Interacts with host TRPC4AP; leading to prevent ubiquitination of TRPC4AP. Interacts with host PLSCR1; this interaction promotes ubiquitination and degradation of HBx and impairs HBx-mediated cell proliferation. A fraction may be phosphorylated in insect cells and HepG2 cells, a human hepatoblastoma cell line. Phosphorylated in vitro by host protein kinase C or mitogen-activated protein kinase. N-acetylated in insect cells.

It localises to the host cytoplasm. The protein resides in the host nucleus. Its subcellular location is the host mitochondrion. Multifunctional protein that plays a role in silencing host antiviral defenses and promoting viral transcription. Does not seem to be essential for HBV infection. May be directly involved in development of cirrhosis and liver cancer (hepatocellular carcinoma). Most of cytosolic activities involve modulation of cytosolic calcium. The effect on apoptosis is controversial depending on the cell types in which the studies have been conducted. May induce apoptosis by localizing in mitochondria and causing loss of mitochondrial membrane potential. May also modulate apoptosis by binding host CFLAR, a key regulator of the death-inducing signaling complex (DISC). Promotes viral transcription by using the host E3 ubiquitin ligase DDB1 to target the SMC5-SMC6 complex to proteasomal degradation. This host complex would otherwise bind to viral episomal DNA, and prevents its transcription. Moderately stimulates transcription of many different viral and cellular transcription elements. Promoters and enhancers stimulated by HBx contain DNA binding sites for NF-kappa-B, AP-1, AP-2, c-EBP, ATF/CREB, or the calcium-activated factor NF-AT. The chain is Protein X from Homo sapiens (Human).